Reading from the N-terminus, the 335-residue chain is 3-hydroxy-3-methylglutaryl-CoA lyase, cytoplasmic (335 aa).

Glycine 2 carries the N-myristoyl glycine lipid modification. A Pyruvate carboxyltransferase domain is found at 43 to 310 (VKIVEVGPRD…ETGVDLLKVM (268 aa)). Residue arginine 51 coordinates substrate. Aspartate 52 is an a divalent metal cation binding site. Position 58 is an N6-acetyllysine (lysine 58). The a divalent metal cation site is built by histidine 243 and histidine 245. Residue cysteine 276 is part of the active site. An a divalent metal cation-binding site is contributed by asparagine 285.

This sequence belongs to the HMG-CoA lyase family. A divalent metal cation serves as cofactor.

Its subcellular location is the cytoplasm. It is found in the cytosol. The protein resides in the endoplasmic reticulum membrane. It catalyses the reaction (3S)-3-hydroxy-3-methylglutaryl-CoA = acetoacetate + acetyl-CoA. The protein operates within metabolic intermediate metabolism; (S)-3-hydroxy-3-methylglutaryl-CoA degradation; acetoacetate from (S)-3-hydroxy-3-methylglutaryl-CoA: step 1/1. In terms of biological role, non-mitochondrial 3-hydroxy-3-methylglutaryl-CoA lyase that catalyzes a cation-dependent cleavage of (S)-3-hydroxy-3-methylglutaryl-CoA into acetyl-CoA and acetoacetate, a key step in ketogenesis, the products of which support energy production in nonhepatic animal tissues. The protein is 3-hydroxy-3-methylglutaryl-CoA lyase, cytoplasmic (hmgcll1) of Danio rerio (Zebrafish).